The sequence spans 321 residues: tRNA U34 carboxymethyltransferase (321 aa).

Residues lysine 90, tryptophan 104, lysine 109, glycine 129, 151–153, 180–181, methionine 195, tyrosine 199, and arginine 314 contribute to the carboxy-S-adenosyl-L-methionine site; these read DPT and IE.

It belongs to the class I-like SAM-binding methyltransferase superfamily. CmoB family. In terms of assembly, homotetramer.

It carries out the reaction carboxy-S-adenosyl-L-methionine + 5-hydroxyuridine(34) in tRNA = 5-carboxymethoxyuridine(34) in tRNA + S-adenosyl-L-homocysteine + H(+). In terms of biological role, catalyzes carboxymethyl transfer from carboxy-S-adenosyl-L-methionine (Cx-SAM) to 5-hydroxyuridine (ho5U) to form 5-carboxymethoxyuridine (cmo5U) at position 34 in tRNAs. This Haemophilus influenzae (strain PittGG) protein is tRNA U34 carboxymethyltransferase.